Reading from the N-terminus, the 249-residue chain is Sec-independent protein translocase protein TatC (249 aa).

The next 6 helical transmembrane spans lie at 18-38 (VSVG…KNIF), 69-89 (AIVI…APGL), 96-116 (VILP…AFSY), 151-171 (LILG…LAKV), 187-207 (IVVI…SQIF), and 208-228 (MALP…MVNP).

It belongs to the TatC family. The Tat system comprises two distinct complexes: a TatABC complex, containing multiple copies of TatA, TatB and TatC subunits, and a separate TatA complex, containing only TatA subunits. Substrates initially bind to the TatABC complex, which probably triggers association of the separate TatA complex to form the active translocon.

The protein resides in the cell inner membrane. Functionally, part of the twin-arginine translocation (Tat) system that transports large folded proteins containing a characteristic twin-arginine motif in their signal peptide across membranes. Together with TatB, TatC is part of a receptor directly interacting with Tat signal peptides. This Helicobacter pylori (strain J99 / ATCC 700824) (Campylobacter pylori J99) protein is Sec-independent protein translocase protein TatC.